The following is a 357-amino-acid chain: Dual-specificity RNA methyltransferase RlmN (357 aa).

Residue glutamate 89 is the Proton acceptor of the active site. Positions 109–340 constitute a Radical SAM core domain; the sequence is EGEKYTVCVS…CTIRESKALD (232 aa). Cysteine 116 and cysteine 345 are disulfide-bonded. The [4Fe-4S] cluster site is built by cysteine 123, cysteine 127, and cysteine 130. S-adenosyl-L-methionine contacts are provided by residues 173–174, serine 203, 226–228, and asparagine 302; these read GE and SLH. Cysteine 345 serves as the catalytic S-methylcysteine intermediate.

It belongs to the radical SAM superfamily. RlmN family. Requires [4Fe-4S] cluster as cofactor.

It is found in the cytoplasm. The enzyme catalyses adenosine(2503) in 23S rRNA + 2 reduced [2Fe-2S]-[ferredoxin] + 2 S-adenosyl-L-methionine = 2-methyladenosine(2503) in 23S rRNA + 5'-deoxyadenosine + L-methionine + 2 oxidized [2Fe-2S]-[ferredoxin] + S-adenosyl-L-homocysteine. It catalyses the reaction adenosine(37) in tRNA + 2 reduced [2Fe-2S]-[ferredoxin] + 2 S-adenosyl-L-methionine = 2-methyladenosine(37) in tRNA + 5'-deoxyadenosine + L-methionine + 2 oxidized [2Fe-2S]-[ferredoxin] + S-adenosyl-L-homocysteine. Specifically methylates position 2 of adenine 2503 in 23S rRNA and position 2 of adenine 37 in tRNAs. m2A2503 modification seems to play a crucial role in the proofreading step occurring at the peptidyl transferase center and thus would serve to optimize ribosomal fidelity. The chain is Dual-specificity RNA methyltransferase RlmN from Helicobacter pylori (strain P12).